The chain runs to 256 residues: Fumarate reductase iron-sulfur subunit (256 aa).

The 91-residue stretch at 7–97 folds into the 2Fe-2S ferredoxin-type domain; it reads MNVEVLRYNP…HMRIEPLANF (91 aa). Tyrosine 14 provides a ligand contact to a menaquinone. Positions 58, 63, 66, and 78 each coordinate [2Fe-2S] cluster. The region spanning 151 to 180 is the 4Fe-4S ferredoxin-type domain; that stretch reads LEKYRQFSMCINCGLCYAACPQFGLNPEFL. Positions 160, 163, and 166 each coordinate [4Fe-4S] cluster. [3Fe-4S] cluster contacts are provided by cysteine 170, cysteine 216, and cysteine 222. Cysteine 226 contacts [4Fe-4S] cluster. An a menaquinone-binding site is contributed by 237–240; that stretch reads NQGK.

The protein belongs to the succinate dehydrogenase/fumarate reductase iron-sulfur protein family. Fumarate dehydrogenase forms part of an enzyme complex containing four subunits: a flavoprotein, an iron-sulfur, and two hydrophobic anchor proteins. The cofactor is [2Fe-2S] cluster. It depends on [3Fe-4S] cluster as a cofactor. [4Fe-4S] cluster is required as a cofactor.

Its subcellular location is the cell inner membrane. It carries out the reaction a quinone + succinate = fumarate + a quinol. The catalysed reaction is a menaquinone + succinate = a menaquinol + fumarate. This chain is Fumarate reductase iron-sulfur subunit (frdB), found in Haemophilus influenzae (strain ATCC 51907 / DSM 11121 / KW20 / Rd).